The following is a 294-amino-acid chain: ATP synthase gamma chain (294 aa).

The protein belongs to the ATPase gamma chain family. As to quaternary structure, F-type ATPases have 2 components, CF(1) - the catalytic core - and CF(0) - the membrane proton channel. CF(1) has five subunits: alpha(3), beta(3), gamma(1), delta(1), epsilon(1). CF(0) has three main subunits: a, b and c.

The protein resides in the cell inner membrane. In terms of biological role, produces ATP from ADP in the presence of a proton gradient across the membrane. The gamma chain is believed to be important in regulating ATPase activity and the flow of protons through the CF(0) complex. The sequence is that of ATP synthase gamma chain from Paraburkholderia phytofirmans (strain DSM 17436 / LMG 22146 / PsJN) (Burkholderia phytofirmans).